The following is a 155-amino-acid chain: MSREAISNNELTEEQIAEFKEAFSLFDKDGDGTITTSELGTVMRSLGQNPTEAELHDMINEVDADGNGTIDFTEFLTMMAKKMKDTDNEEEIKEAFKVFDKDGNGFISAQELRHVMCNLGEKLTDEEVDEMIREADIDGDNQINYTEFVKMMMQK.

EF-hand domains follow at residues 14-49 (EQIA…LGQN), 50-85 (PTEA…KMKD), 87-122 (DNEE…LGEK), and 123-155 (LTDE…MMQK). Ca(2+)-binding residues include D27, D29, D31, T33, E38, D63, D65, N67, T69, E74, D100, D102, N104, E111, D136, D138, D140, Q142, and E147.

The protein belongs to the calmodulin family.

The protein localises to the cell projection. It is found in the cilium. Its subcellular location is the flagellum. Calmodulin mediates the control of a large number of enzymes, ion channels and other proteins by Ca(2+). Among the enzymes to be stimulated by the calmodulin-Ca(2+) complex are a number of protein kinases and phosphatases. The sequence is that of Calmodulin, flagellar (CAM1) from Naegleria gruberi (Amoeba).